We begin with the raw amino-acid sequence, 642 residues long: uncharacterized protein (642 aa).

Mg(2+) contacts are provided by glutamate 15 and aspartate 118. The PINc domain occupies 29 to 149 (VCVDTCVVID…YNLAKAQGIE (121 aa)). The KH domain maps to 510–578 (DNSIDLIVPE…ELESTRIYET (69 aa)).

In the N-terminal section; belongs to the PINc/VapC protein family. Mg(2+) is required as a cofactor.

This is an uncharacterized protein from Methanocaldococcus jannaschii (strain ATCC 43067 / DSM 2661 / JAL-1 / JCM 10045 / NBRC 100440) (Methanococcus jannaschii).